A 211-amino-acid polypeptide reads, in one-letter code: FMN-dependent NADH:quinone oxidoreductase 2 (211 aa).

Residues serine 10 and serine 17–serine 19 contribute to the FMN site.

It belongs to the azoreductase type 1 family. As to quaternary structure, homodimer. Requires FMN as cofactor.

It catalyses the reaction 2 a quinone + NADH + H(+) = 2 a 1,4-benzosemiquinone + NAD(+). It carries out the reaction N,N-dimethyl-1,4-phenylenediamine + anthranilate + 2 NAD(+) = 2-(4-dimethylaminophenyl)diazenylbenzoate + 2 NADH + 2 H(+). Its function is as follows. Quinone reductase that provides resistance to thiol-specific stress caused by electrophilic quinones. Functionally, also exhibits azoreductase activity. Catalyzes the reductive cleavage of the azo bond in aromatic azo compounds to the corresponding amines. In Listeria innocua serovar 6a (strain ATCC BAA-680 / CLIP 11262), this protein is FMN-dependent NADH:quinone oxidoreductase 2.